We begin with the raw amino-acid sequence, 179 residues long: UPF0227 protein SO_2251 (179 aa).

The protein belongs to the UPF0227 family.

This chain is UPF0227 protein SO_2251, found in Shewanella oneidensis (strain ATCC 700550 / JCM 31522 / CIP 106686 / LMG 19005 / NCIMB 14063 / MR-1).